The following is a 152-amino-acid chain: SsrA-binding protein (152 aa).

Residues 130-152 (HDKRQDLKQRQDKREMERAMKQR) form a disordered region. Positions 132–152 (KRQDLKQRQDKREMERAMKQR) are enriched in basic and acidic residues.

This sequence belongs to the SmpB family.

It is found in the cytoplasm. In terms of biological role, required for rescue of stalled ribosomes mediated by trans-translation. Binds to transfer-messenger RNA (tmRNA), required for stable association of tmRNA with ribosomes. tmRNA and SmpB together mimic tRNA shape, replacing the anticodon stem-loop with SmpB. tmRNA is encoded by the ssrA gene; the 2 termini fold to resemble tRNA(Ala) and it encodes a 'tag peptide', a short internal open reading frame. During trans-translation Ala-aminoacylated tmRNA acts like a tRNA, entering the A-site of stalled ribosomes, displacing the stalled mRNA. The ribosome then switches to translate the ORF on the tmRNA; the nascent peptide is terminated with the 'tag peptide' encoded by the tmRNA and targeted for degradation. The ribosome is freed to recommence translation, which seems to be the essential function of trans-translation. This is SsrA-binding protein from Thermosynechococcus vestitus (strain NIES-2133 / IAM M-273 / BP-1).